The chain runs to 124 residues: Large ribosomal subunit protein bL12 (124 aa).

It belongs to the bacterial ribosomal protein bL12 family. As to quaternary structure, homodimer. Part of the ribosomal stalk of the 50S ribosomal subunit. Forms a multimeric L10(L12)X complex, where L10 forms an elongated spine to which 2 to 4 L12 dimers bind in a sequential fashion. Binds GTP-bound translation factors.

Functionally, forms part of the ribosomal stalk which helps the ribosome interact with GTP-bound translation factors. Is thus essential for accurate translation. The polypeptide is Large ribosomal subunit protein bL12 (Anaeromyxobacter dehalogenans (strain 2CP-C)).